A 398-amino-acid polypeptide reads, in one-letter code: Tyrosine--tRNA ligase (398 aa).

The 'HIGH' region signature appears at 42–51 (PTAPDLHLGH). The 'KMSKS' region motif lies at 226–230 (KMSKS). K229 provides a ligand contact to ATP. In terms of domain architecture, S4 RNA-binding spans 341 to 397 (AFLEAAGLVKSRGEAKRLIKEGALSVDGVRCDDANSPLASGEYVIKLGKKRFLRLTV).

It belongs to the class-I aminoacyl-tRNA synthetase family. TyrS type 2 subfamily. As to quaternary structure, homodimer.

The protein localises to the cytoplasm. It catalyses the reaction tRNA(Tyr) + L-tyrosine + ATP = L-tyrosyl-tRNA(Tyr) + AMP + diphosphate + H(+). Its function is as follows. Catalyzes the attachment of tyrosine to tRNA(Tyr) in a two-step reaction: tyrosine is first activated by ATP to form Tyr-AMP and then transferred to the acceptor end of tRNA(Tyr). The polypeptide is Tyrosine--tRNA ligase (Nitratidesulfovibrio vulgaris (strain ATCC 29579 / DSM 644 / CCUG 34227 / NCIMB 8303 / VKM B-1760 / Hildenborough) (Desulfovibrio vulgaris)).